Reading from the N-terminus, the 2443-residue chain is NFX1-type zinc finger-containing protein 1 homolog (2443 aa).

Disordered regions lie at residues 212–339 (PHKQ…EGDH), 545–566 (SSDS…NVYG), and 583–672 (HRDN…FVSP). Low complexity predominate over residues 246–263 (ISISNSSPPGLSSVSPIP). Residues 275-294 (PQPPGLSIPAPPGISLPTPP) are compositionally biased toward pro residues. The span at 297 to 310 (SLQNHQNDQFEQAH) shows a compositional bias: polar residues. The segment covering 311–322 (STISRMSENSSS) has biased composition (low complexity). A compositionally biased stretch (polar residues) spans 545–564 (SSDSGRQVLSESRGAGSSNV). Composition is skewed to basic and acidic residues over residues 601–638 (GEVH…RRDQ) and 662–672 (EHSRDDKFVSP). In terms of domain architecture, UvrD-like helicase ATP-binding spans 1040-1545 (MDESQRLAFC…MNLTISDKIV (506 aa)). 1061–1068 (GPPGTGKT) provides a ligand contact to ATP. NF-X1-type zinc fingers lie at residues 1769–1791 (CGHV…RCLY), 1853–1873 (CGHA…ECSQ), 1912–1930 (CPHK…ECME), and 2027–2044 (CGHT…PCKA).

Belongs to the ZNFX1 family. Interacts with ego-1, csr-1, wago-1 and prg-1. Interacts with wago-4; the interaction promotes the transmission of epigenetic information across generations. As to expression, expressed in germs cells. Not expressed in somatic tissues.

The protein resides in the cytoplasm. The protein localises to the perinuclear region. It is found in the cytoplasmic granule. The enzyme catalyses ATP + H2O = ADP + phosphate + H(+). Its function is as follows. Epigenetic inheritance factor which, in association with the Argonaute protein wago-4, mediates small RNA-directed transgenerational epigenetic inheritance and thus balances the transgenerational inheritance of epigenetic information. Specifically, maintains a balanced production of small RNAs by preventing the spread of epigenetic signals towards the 5'-end of target mRNAs. Plays a role in small RNA-induced gene silencing in the germline. The chain is NFX1-type zinc finger-containing protein 1 homolog from Caenorhabditis elegans.